The chain runs to 395 residues: Na(+)/H(+) antiporter NhaA (395 aa).

The next 11 membrane-spanning stretches (helical) occupy residues 11–31, 61–81, 96–116, 127–147, 156–176, 179–199, 215–237, 262–282, 295–315, 334–354, and 366–386; these read FQLE…ALII, LLLW…GLEV, IVLP…IYWF, GWAI…ALLG, LFLM…IAIF, GELS…LVAM, LILW…TLAF, VAYG…LSGV, IAVG…WLAV, VAIL…LAFV, and MGIL…TAAA.

This sequence belongs to the NhaA Na(+)/H(+) (TC 2.A.33) antiporter family.

The protein localises to the cell inner membrane. The catalysed reaction is Na(+)(in) + 2 H(+)(out) = Na(+)(out) + 2 H(+)(in). In terms of biological role, na(+)/H(+) antiporter that extrudes sodium in exchange for external protons. The chain is Na(+)/H(+) antiporter NhaA from Pseudomonas fluorescens (strain Pf0-1).